The following is a 187-amino-acid chain: Peptide deformylase 2 (187 aa).

Positions 107 and 149 each coordinate Fe cation. Glu-150 is an active-site residue. Fe cation is bound at residue His-153.

It belongs to the polypeptide deformylase family. Requires Fe(2+) as cofactor.

The catalysed reaction is N-terminal N-formyl-L-methionyl-[peptide] + H2O = N-terminal L-methionyl-[peptide] + formate. Removes the formyl group from the N-terminal Met of newly synthesized proteins. Requires at least a dipeptide for an efficient rate of reaction. N-terminal L-methionine is a prerequisite for activity but the enzyme has broad specificity at other positions. The sequence is that of Peptide deformylase 2 from Gloeobacter violaceus (strain ATCC 29082 / PCC 7421).